A 670-amino-acid polypeptide reads, in one-letter code: Transcriptional regulatory protein DOT6 (670 aa).

The segment covering 1-44 has biased composition (polar residues); it reads MSISTSLNSASIHLSSMDTHPQLHSLTRQPHSSSTAMSKNEAQE. The tract at residues 1-78 is disordered; it reads MSISTSLNSA…SKNPSSWDPQ (78 aa). Over residues 45 to 74 the composition is skewed to low complexity; it reads SSPSLPASSSSSTSASASASSKNSSKNPSS. The HTH myb-type domain occupies 67–121; it reads NSSKNPSSWDPQDDLLLRHLKEVKKMGWKDISQYFPNRTPNACQFRWRRLKSGNL. A DNA-binding region (H-T-H motif) is located at residues 94–117; it reads WKDISQYFPNRTPNACQFRWRRLK. The segment covering 226 to 242 has biased composition (basic residues); sequence HHPHQHLHHHPHHKTLK. Disordered stretches follow at residues 226-250, 293-332, 406-436, and 483-659; these read HHPH…SHSF, TTPS…NTSR, HSSS…CNPT, and ADML…NSPL. Ser-245 and Ser-247 each carry phosphoserine. 2 stretches are compositionally biased toward low complexity: residues 295 to 307 and 316 to 332; these read PSSP…LLSS and NWSR…NTSR. The segment covering 425-436 has biased composition (polar residues); the sequence is SGHSMKSSCNPT. Ser-487 carries the phosphoserine modification. At Thr-489 the chain carries Phosphothreonine. The residue at position 491 (Ser-491) is a Phosphoserine. Basic and acidic residues predominate over residues 512–522; the sequence is DDDKGSDKEDV. 2 stretches are compositionally biased toward low complexity: residues 544-561 and 587-598; these read SSNK…SSKD and TITSDTSSSAAT. Polar residues predominate over residues 599 to 608; sequence MNRTPNSKNP. Over residues 622-659 the composition is skewed to low complexity; the sequence is ITPRPKPSSTTTSITTETTNNMINHSSSTTTTTNNSPL.

The protein belongs to the DOT6 family. As to quaternary structure, component of the RPD3C(L) complex composed of at least ASH1, CTI6, DEP1, DOT6, PHO23, RPD3, RXT2, RXT3, SAP30, SDS3, SIN3, TOD6; UME1 and UME6.

Its subcellular location is the nucleus. Its function is as follows. Component of the RPD3 histone deacetylase complex RPD3C(L) responsible for the deacetylation of lysine residues on the N-terminal part of the core histones (H2A, H2B, H3 and H4). Histone deacetylation gives a tag for epigenetic repression and plays an important role in transcriptional regulation, cell cycle progression and developmental events. DOT6 binds to sequences containing the core CGATG, which resembles the PAC (Polymerase A and C) motif. The chain is Transcriptional regulatory protein DOT6 (DOT6) from Saccharomyces cerevisiae (strain ATCC 204508 / S288c) (Baker's yeast).